Consider the following 314-residue polypeptide: tRNA pseudouridine synthase B (314 aa).

The active-site Nucleophile is Asp47.

The protein belongs to the pseudouridine synthase TruB family. Type 1 subfamily.

It carries out the reaction uridine(55) in tRNA = pseudouridine(55) in tRNA. Functionally, responsible for synthesis of pseudouridine from uracil-55 in the psi GC loop of transfer RNAs. This chain is tRNA pseudouridine synthase B, found in Vibrio parahaemolyticus serotype O3:K6 (strain RIMD 2210633).